The following is a 1939-amino-acid chain: Myosin-1 (1939 aa).

Residues 33-82 (DAKTSVFVAEPKESFVKGTVQSREGGKVTVKTEAGATLTVKEDQVFPMNP) form the Myosin N-terminal SH3-like domain. A phosphothreonine mark is found at Thr-64 and Thr-69. In terms of domain architecture, Myosin motor spans 86–782 (DKIEDMAMMT…LLGLLEEMRD (697 aa)). Position 130 is an N6,N6,N6-trimethyllysine (Lys-130). Position 179 to 186 (179 to 186 (GESGAGKT)) interacts with ATP. Phosphotyrosine is present on Tyr-389. Thr-419 is modified (phosphothreonine). Phosphotyrosine is present on Tyr-424. The interval 659-681 (LNKLMTNLRSTHPHFVRCIIPNE) is actin-binding. A Pros-methylhistidine modification is found at His-757. The segment at 761 to 775 (KFGHTKVFFKAGLLG) is actin-binding. Positions 785–814 (LAQLITRTQARCRGFLARVEYQKMVERRES) constitute an IQ domain. Residues 843–1939 (LLKSAETEKE…EVHTKIISEE (1097 aa)) adopt a coiled-coil conformation. 2 positions are modified to phosphoserine: Ser-1092 and Ser-1096. Disordered stretches follow at residues 1125-1147 (EIEA…SREL) and 1153-1172 (RLEE…KKRE). Residues 1128-1147 (AERASRAKAEKQRSDLSREL) show a composition bias toward basic and acidic residues. 2 positions are modified to phosphoserine: Ser-1162 and Ser-1237. Thr-1241 is modified (phosphothreonine). Ser-1243 carries the phosphoserine modification. Thr-1255 is subject to Phosphothreonine. Position 1261 is a phosphoserine (Ser-1261). Residues Thr-1265 and Thr-1286 each carry the phosphothreonine modification. Residues Ser-1288, Ser-1292, Ser-1303, and Ser-1306 each carry the phosphoserine modification. Residue Tyr-1464 is modified to Phosphotyrosine. Residue Thr-1467 is modified to Phosphothreonine. Ser-1474 carries the post-translational modification Phosphoserine. Tyr-1492 carries the phosphotyrosine modification. Ser-1495 is subject to Phosphoserine. At Thr-1501 the chain carries Phosphothreonine. At Ser-1514 the chain carries Phosphoserine. Thr-1517 bears the Phosphothreonine mark. Phosphoserine is present on residues Ser-1542, Ser-1554, Ser-1574, Ser-1600, Ser-1603, Ser-1714, and Ser-1726. 2 positions are modified to phosphothreonine: Thr-1730 and Thr-1736. Ser-1739 carries the phosphoserine modification.

It belongs to the TRAFAC class myosin-kinesin ATPase superfamily. Myosin family. Muscle myosin is a hexameric protein that consists of 2 heavy chain subunits (MHC), 2 alkali light chain subunits (MLC) and 2 regulatory light chain subunits (MLC-2). Interacts with SLC26A5.

Its subcellular location is the cytoplasm. It localises to the myofibril. Required for normal hearing. It plays a role in cochlear amplification of auditory stimuli, likely through the positive regulation of prestin (SLC26A5) activity and outer hair cell (OHC) electromotility. This is Myosin-1 (MYH1) from Sus scrofa (Pig).